The following is a 273-amino-acid chain: Putative phosphoenolpyruvate synthase regulatory protein (273 aa).

153 to 160 (GVSRCGKT) provides a ligand contact to ADP.

This sequence belongs to the pyruvate, phosphate/water dikinase regulatory protein family. PSRP subfamily.

The enzyme catalyses [pyruvate, water dikinase] + ADP = [pyruvate, water dikinase]-phosphate + AMP + H(+). It catalyses the reaction [pyruvate, water dikinase]-phosphate + phosphate + H(+) = [pyruvate, water dikinase] + diphosphate. In terms of biological role, bifunctional serine/threonine kinase and phosphorylase involved in the regulation of the phosphoenolpyruvate synthase (PEPS) by catalyzing its phosphorylation/dephosphorylation. The polypeptide is Putative phosphoenolpyruvate synthase regulatory protein (Sodalis glossinidius (strain morsitans)).